We begin with the raw amino-acid sequence, 384 residues long: Zinc finger protein GLIS2 homolog (384 aa).

The C2H2-type 1 zinc-finger motif lies at 128 to 153 (FVCNWTDCDRVFDTLDALAQHVTQRH). The segment at 163-190 (YYCRWRGCQRSERGFNARYKMLVHTRTH) adopts a C2H2-type 2; degenerate zinc-finger fold. 3 C2H2-type zinc fingers span residues 196-218 (HRCH…IRSH), 224-248 (YKCS…TRTH), and 254-280 (YMCK…TFKH). The segment at 321 to 343 (SSSSARYYDDSNNEPSDYSLKPK) is disordered.

It belongs to the GLI C2H2-type zinc-finger protein family.

The protein localises to the nucleus. Functionally, transcription factor which represses a set of lipase genes involved in fat catabolism. This is Zinc finger protein GLIS2 homolog (sug) from Drosophila melanogaster (Fruit fly).